A 144-amino-acid chain; its full sequence is PE family protein PE9 (144 aa).

One can recognise a PE domain in the interval Met1 to Phe87. Residues Ala98 to Gln124 form a disordered region.

This sequence belongs to the mycobacterial PE family. In terms of assembly, forms a complex with PE10. The complex interacts with human TLR4.

The protein localises to the secreted. It localises to the cell wall. It is found in the cell surface. Its function is as follows. Together with PE10, induces macrophage apoptosis through human Toll-like receptor 4 (TLR4) signaling pathway. Interaction with TLR4 leads to increased levels of phospho-IRF-3, increase in the transcript levels of IFN-beta and pro-apoptotic genes, up-regulation of IL-10, down-regulation of IL-1b and enhanced levels of macrophage apoptosis. This chain is PE family protein PE9, found in Mycobacterium tuberculosis (strain ATCC 25618 / H37Rv).